The chain runs to 158 residues: NAD(P)H-quinone oxidoreductase subunit N (158 aa).

It belongs to the complex I NdhN subunit family. As to quaternary structure, NDH-1 can be composed of about 15 different subunits; different subcomplexes with different compositions have been identified which probably have different functions.

The protein localises to the cellular thylakoid membrane. The enzyme catalyses a plastoquinone + NADH + (n+1) H(+)(in) = a plastoquinol + NAD(+) + n H(+)(out). The catalysed reaction is a plastoquinone + NADPH + (n+1) H(+)(in) = a plastoquinol + NADP(+) + n H(+)(out). In terms of biological role, NDH-1 shuttles electrons from an unknown electron donor, via FMN and iron-sulfur (Fe-S) centers, to quinones in the respiratory and/or the photosynthetic chain. The immediate electron acceptor for the enzyme in this species is believed to be plastoquinone. Couples the redox reaction to proton translocation, and thus conserves the redox energy in a proton gradient. Cyanobacterial NDH-1 also plays a role in inorganic carbon-concentration. The protein is NAD(P)H-quinone oxidoreductase subunit N of Prochlorococcus marinus (strain MIT 9312).